The following is a 208-amino-acid chain: Crossover junction endodeoxyribonuclease RuvC (208 aa).

Active-site residues include aspartate 9, glutamate 70, and aspartate 143. Mg(2+)-binding residues include aspartate 9, glutamate 70, and aspartate 143.

The protein belongs to the RuvC family. Homodimer which binds Holliday junction (HJ) DNA. The HJ becomes 2-fold symmetrical on binding to RuvC with unstacked arms; it has a different conformation from HJ DNA in complex with RuvA. In the full resolvosome a probable DNA-RuvA(4)-RuvB(12)-RuvC(2) complex forms which resolves the HJ. Mg(2+) serves as cofactor.

It localises to the cytoplasm. It catalyses the reaction Endonucleolytic cleavage at a junction such as a reciprocal single-stranded crossover between two homologous DNA duplexes (Holliday junction).. Functionally, the RuvA-RuvB-RuvC complex processes Holliday junction (HJ) DNA during genetic recombination and DNA repair. Endonuclease that resolves HJ intermediates. Cleaves cruciform DNA by making single-stranded nicks across the HJ at symmetrical positions within the homologous arms, yielding a 5'-phosphate and a 3'-hydroxyl group; requires a central core of homology in the junction. The consensus cleavage sequence is 5'-(A/T)TT(C/G)-3'. Cleavage occurs on the 3'-side of the TT dinucleotide at the point of strand exchange. HJ branch migration catalyzed by RuvA-RuvB allows RuvC to scan DNA until it finds its consensus sequence, where it cleaves and resolves the cruciform DNA. This Leifsonia xyli subsp. xyli (strain CTCB07) protein is Crossover junction endodeoxyribonuclease RuvC.